The following is a 442-amino-acid chain: Tubulin beta chain (442 aa).

Residues Gln11, Glu69, Ser138, Gly142, Thr143, Gly144, Asn204, and Asn226 each contribute to the GTP site. Mg(2+) is bound at residue Glu69. The tract at residues 421 to 442 (EYQQYQDATAEDEEEMDEEQME) is disordered. The segment covering 429 to 442 (TAEDEEEMDEEQME) has biased composition (acidic residues).

The protein belongs to the tubulin family. In terms of assembly, dimer of alpha and beta chains. A typical microtubule is a hollow water-filled tube with an outer diameter of 25 nm and an inner diameter of 15 nM. Alpha-beta heterodimers associate head-to-tail to form protofilaments running lengthwise along the microtubule wall with the beta-tubulin subunit facing the microtubule plus end conferring a structural polarity. Microtubules usually have 13 protofilaments but different protofilament numbers can be found in some organisms and specialized cells. Mg(2+) is required as a cofactor.

It localises to the cytoplasm. The protein localises to the cytoskeleton. Its function is as follows. Tubulin is the major constituent of microtubules, a cylinder consisting of laterally associated linear protofilaments composed of alpha- and beta-tubulin heterodimers. Microtubules grow by the addition of GTP-tubulin dimers to the microtubule end, where a stabilizing cap forms. Below the cap, tubulin dimers are in GDP-bound state, owing to GTPase activity of alpha-tubulin. In Stylonychia lemnae (Ciliate), this protein is Tubulin beta chain (TUBB1).